Here is a 1333-residue protein sequence, read N- to C-terminus: DNA-directed RNA polymerase subunit beta' (1333 aa).

Positions 60, 62, 75, and 78 each coordinate Zn(2+). Mg(2+) is bound by residues Asp-535, Asp-537, and Asp-539. Zn(2+) is bound by residues Cys-901, Cys-983, Cys-990, and Cys-993.

The protein belongs to the RNA polymerase beta' chain family. As to quaternary structure, the RNAP catalytic core consists of 2 alpha, 1 beta, 1 beta' and 1 omega subunit. When a sigma factor is associated with the core the holoenzyme is formed, which can initiate transcription. Mg(2+) serves as cofactor. Requires Zn(2+) as cofactor.

The catalysed reaction is RNA(n) + a ribonucleoside 5'-triphosphate = RNA(n+1) + diphosphate. In terms of biological role, DNA-dependent RNA polymerase catalyzes the transcription of DNA into RNA using the four ribonucleoside triphosphates as substrates. In Corynebacterium efficiens (strain DSM 44549 / YS-314 / AJ 12310 / JCM 11189 / NBRC 100395), this protein is DNA-directed RNA polymerase subunit beta'.